Reading from the N-terminus, the 21-residue chain is Bombinin-H4 (21 aa).

Residue Ile2 is modified to D-allo-isoleucine. Residue Ile20 is modified to Isoleucine amide.

The protein belongs to the bombinin family. As to expression, expressed by the skin glands.

The protein resides in the secreted. In terms of biological role, has antimicrobial and hemolytic activities. This is Bombinin-H4 from Bombina variegata (Yellow-bellied toad).